We begin with the raw amino-acid sequence, 158 residues long: 2-C-methyl-D-erythritol 2,4-cyclodiphosphate synthase (158 aa).

Positions 9 and 11 each coordinate a divalent metal cation. 4-CDP-2-C-methyl-D-erythritol 2-phosphate contacts are provided by residues 9–11 and 35–36; these read DVH and HS. Residue His43 participates in a divalent metal cation binding. 4-CDP-2-C-methyl-D-erythritol 2-phosphate-binding positions include 57-59, 62-66, 133-136, Phe140, and Arg143; these read DIG, FPDTD, and TTTE.

Belongs to the IspF family. As to quaternary structure, homotrimer. Requires a divalent metal cation as cofactor.

The catalysed reaction is 4-CDP-2-C-methyl-D-erythritol 2-phosphate = 2-C-methyl-D-erythritol 2,4-cyclic diphosphate + CMP. It functions in the pathway isoprenoid biosynthesis; isopentenyl diphosphate biosynthesis via DXP pathway; isopentenyl diphosphate from 1-deoxy-D-xylulose 5-phosphate: step 4/6. Involved in the biosynthesis of isopentenyl diphosphate (IPP) and dimethylallyl diphosphate (DMAPP), two major building blocks of isoprenoid compounds. Catalyzes the conversion of 4-diphosphocytidyl-2-C-methyl-D-erythritol 2-phosphate (CDP-ME2P) to 2-C-methyl-D-erythritol 2,4-cyclodiphosphate (ME-CPP) with a corresponding release of cytidine 5-monophosphate (CMP). In Haemophilus influenzae (strain PittEE), this protein is 2-C-methyl-D-erythritol 2,4-cyclodiphosphate synthase.